Here is a 294-residue protein sequence, read N- to C-terminus: tRNA-cytidine(32) 2-sulfurtransferase (294 aa).

The PP-loop motif motif lies at 58-63; it reads SGGKDS. [4Fe-4S] cluster-binding residues include C133, C136, and C224.

Belongs to the TtcA family. As to quaternary structure, homodimer. Mg(2+) serves as cofactor. [4Fe-4S] cluster is required as a cofactor.

It is found in the cytoplasm. The catalysed reaction is cytidine(32) in tRNA + S-sulfanyl-L-cysteinyl-[cysteine desulfurase] + AH2 + ATP = 2-thiocytidine(32) in tRNA + L-cysteinyl-[cysteine desulfurase] + A + AMP + diphosphate + H(+). Its pathway is tRNA modification. In terms of biological role, catalyzes the ATP-dependent 2-thiolation of cytidine in position 32 of tRNA, to form 2-thiocytidine (s(2)C32). The sulfur atoms are provided by the cysteine/cysteine desulfurase (IscS) system. This Ruegeria pomeroyi (strain ATCC 700808 / DSM 15171 / DSS-3) (Silicibacter pomeroyi) protein is tRNA-cytidine(32) 2-sulfurtransferase.